The following is a 491-amino-acid chain: MELYFSWLILALAIFIGTYAFVFGVLRRVNEWYHCGKLGEMKHSLPPGDMGWPLVGNMLSHQKAFKSSEPQSFIYNLFERYGRKGIYRNHIFGSPCVIVVAPEACKQVFLDDENFKMGYPTSTNKLTFRGSFITASKEGQKRIRKLATSPLKGHKAIVVYIDNIEEIVIKSLKGWASLDTPIEFLTEMRKATFKIIANIFLGSSSDSVIGSVEKHYIDYAHGLISPFPINLPGFSFHKAMKARDMLGEILQPVLNERRAMKSDEQKGRKGLIDLLMEVEDENGTKLDDLDIIDMLISFLSAGHESSAHIATWALIHLHKHPQTLRKAKEEQEDIIKKRPSTQKGLTIEEIKQMEYLAKVIAETLRMTNLSPSSFREAEADVNIQGYFIPKGWKVLVYNRGVHYNPENYPDPKQFDPSRWDNHTTRPGSFIPFGGGSRICPGADLAKLEISIFIHYFLLNYKLELQNPECPAEYLPVPRPSDQCLAKVVGFK.

A helical transmembrane segment spans residues 5–25 (FSWLILALAIFIGTYAFVFGV). Residue cysteine 439 coordinates heme.

It belongs to the cytochrome P450 family. Requires heme as cofactor. Expressed in maturing fruits and in juice vesicles.

Its subcellular location is the membrane. The catalysed reaction is luvungin A + reduced [NADPH--hemoprotein reductase] + O2 = (1S)-1-hydroxy-luvungin A + oxidized [NADPH--hemoprotein reductase] + H2O + H(+). The protein operates within secondary metabolite biosynthesis; terpenoid biosynthesis. Monooxygenase involved in the biosynthesis of limonoids triterpene natural products such as limonin, a compound with insecticidal activity responsible for the bitter taste in citrus. Catalyzes the conversion of luvungin A to (1S)-1-hydroxy-luvungin A. The protein is (1S)-1-hydroxy-luvungin A synthase CYP88A37 of Citrus sinensis (Sweet orange).